The chain runs to 283 residues: NADH-ubiquinone oxidoreductase 30.4 kDa subunit, mitochondrial (283 aa).

A mitochondrion-targeting transit peptide spans 1–17 (MASKLCRSRALASALRS). A disordered region spans residues 258-283 (GAGIDRKPESFKLPTPKPETKPEEKK).

The protein belongs to the complex I 30 kDa subunit family. In terms of assembly, complex I is composed of about 40 different subunits. This is a component of the iron-sulfur protein fraction.

Its subcellular location is the mitochondrion inner membrane. It carries out the reaction a ubiquinone + NADH + 5 H(+)(in) = a ubiquinol + NAD(+) + 4 H(+)(out). Core subunit of the mitochondrial membrane respiratory chain NADH dehydrogenase (Complex I) that is believed to belong to the minimal assembly required for catalysis. Complex I functions in the transfer of electrons from NADH to the respiratory chain. The immediate electron acceptor for the enzyme is believed to be ubiquinone. This is NADH-ubiquinone oxidoreductase 30.4 kDa subunit, mitochondrial (nuo-31) from Neurospora crassa (strain ATCC 24698 / 74-OR23-1A / CBS 708.71 / DSM 1257 / FGSC 987).